The chain runs to 193 residues: Ion-translocating oxidoreductase complex subunit A (193 aa).

The next 6 membrane-spanning stretches (helical) occupy residues 4-24, 38-58, 65-85, 102-122, 134-154, and 171-191; these read LALILVSTVLVNNFVLVKFLG, AMGMALATTFVLTLSAVCSYL, APLGVEYLRTITFIMVIAVVV, VLGIYLPLITTNCAVLGVALL, AVYGFGAAAGFSLVLVLFAAL, and SVALVTAGILSMGFMGFAGLV.

The protein belongs to the NqrDE/RnfAE family. The complex is composed of six subunits: RnfA, RnfB, RnfC, RnfD, RnfE and RnfG.

The protein resides in the cell inner membrane. Its function is as follows. Part of a membrane-bound complex that couples electron transfer with translocation of ions across the membrane. The sequence is that of Ion-translocating oxidoreductase complex subunit A from Alkalilimnicola ehrlichii (strain ATCC BAA-1101 / DSM 17681 / MLHE-1).